The primary structure comprises 399 residues: Beta-1,4-galactosyltransferase 1 (399 aa).

Topologically, residues 1–24 (MRFREQFLGGSAAMPGATLQRACR) are cytoplasmic. The chain crosses the membrane as a helical; Signal-anchor for type II membrane protein span at residues 25–44 (LLVAVCALHLGVTLVYYLSG). The Lumenal segment spans residues 45-399 (RDLSRLPQLV…QITVDIGTPR (355 aa)). The segment at 61–113 (QGGTNGAAASKQPPGEQRPRGARPPPPLGVSPKPRPGLDSSPGAASGPGLKSN) is disordered. Positions 82–95 (ARPPPPLGVSPKPR) are enriched in pro residues. N-linked (GlcNAc...) asparagine glycosylation occurs at asparagine 113. A disulfide bond links cysteine 131 and cysteine 173. Residues 184–188 (PFRNR), 223–225 (FNR), 250–251 (VD), and tryptophan 311 each bind UDP-alpha-D-galactose. Residues cysteine 244 and cysteine 263 are joined by a disulfide bond. Aspartate 251 is a binding site for Mn(2+). Residue 313-316 (GEDD) coordinates N-acetyl-D-glucosamine. Residue histidine 344 coordinates Mn(2+). 344–346 (HSR) lines the UDP-alpha-D-galactose pocket. An N-acetyl-D-glucosamine-binding site is contributed by arginine 356.

It belongs to the glycosyltransferase 7 family. Homodimer; and heterodimer with alpha-lactalbumin to form lactose synthase. Interacts (via N-terminal cytoplasmic domain) with UBE2Q1 (via N-terminus); the interaction is direct. It depends on Mn(2+) as a cofactor. In terms of processing, the soluble form derives from the membrane forms by proteolytic processing.

Its subcellular location is the golgi apparatus. It localises to the golgi stack membrane. The protein localises to the cell membrane. It is found in the cell surface. The protein resides in the cell projection. Its subcellular location is the filopodium. It localises to the secreted. It carries out the reaction D-glucose + UDP-alpha-D-galactose = lactose + UDP + H(+). The catalysed reaction is an N-acetyl-beta-D-glucosaminyl derivative + UDP-alpha-D-galactose = a beta-D-galactosyl-(1-&gt;4)-N-acetyl-beta-D-glucosaminyl derivative + UDP + H(+). It catalyses the reaction N-acetyl-D-glucosamine + UDP-alpha-D-galactose = beta-D-galactosyl-(1-&gt;4)-N-acetyl-D-glucosamine + UDP + H(+). The enzyme catalyses a beta-D-GlcNAc-(1-&gt;3)-beta-D-Gal-(1-&gt;4)-beta-D-Glc-(1&lt;-&gt;1)-Cer(d18:1(4E)) + UDP-alpha-D-galactose = a neolactoside nLc4Cer(d18:1(4E)) + UDP + H(+). It carries out the reaction a beta-D-glucosylceramide + UDP-alpha-D-galactose = a beta-D-galactosyl-(1-&gt;4)-beta-D-glucosyl-(1&lt;-&gt;1)-ceramide + UDP + H(+). The catalysed reaction is a neolactoside IV(3)-beta-GlcNAc-nLc4Cer + UDP-alpha-D-galactose = a neolactoside nLc6Cer + UDP + H(+). The protein operates within protein modification; protein glycosylation. Functionally, the Golgi complex form catalyzes the production of lactose in the lactating mammary gland and could also be responsible for the synthesis of complex-type N-linked oligosaccharides in many glycoproteins as well as the carbohydrate moieties of glycolipids. Its function is as follows. The cell surface form functions as a recognition molecule during a variety of cell to cell and cell to matrix interactions, as those occurring during development and egg fertilization, by binding to specific oligosaccharide ligands on opposing cells or in the extracellular matrix. The secreted form is responsible for the synthesis of complex-type to N-linked oligosaccharides in many glycoproteins as well as the carbohydrate moieties of glycolipids. In Mus musculus (Mouse), this protein is Beta-1,4-galactosyltransferase 1.